Reading from the N-terminus, the 307-residue chain is S-methyl-5'-thioadenosine phosphorylase (307 aa).

Phosphate-binding positions include Thr20, 62–63, and 95–96; these read RH and SA. Met197 is a binding site for substrate. Ser198 serves as a coordination point for phosphate. 221–223 contacts substrate; sequence DYD.

It belongs to the PNP/MTAP phosphorylase family. MTAP subfamily. As to quaternary structure, homotrimer.

It localises to the cytoplasm. The protein resides in the nucleus. It carries out the reaction S-methyl-5'-thioadenosine + phosphate = 5-(methylsulfanyl)-alpha-D-ribose 1-phosphate + adenine. Its pathway is amino-acid biosynthesis; L-methionine biosynthesis via salvage pathway; S-methyl-5-thio-alpha-D-ribose 1-phosphate from S-methyl-5'-thioadenosine (phosphorylase route): step 1/1. Catalyzes the reversible phosphorylation of S-methyl-5'-thioadenosine (MTA) to adenine and 5-methylthioribose-1-phosphate. Involved in the breakdown of MTA, a major by-product of polyamine biosynthesis. Responsible for the first step in the methionine salvage pathway after MTA has been generated from S-adenosylmethionine. Has broad substrate specificity with 6-aminopurine nucleosides as preferred substrates. This is S-methyl-5'-thioadenosine phosphorylase from Fusarium vanettenii (strain ATCC MYA-4622 / CBS 123669 / FGSC 9596 / NRRL 45880 / 77-13-4) (Fusarium solani subsp. pisi).